The following is a 432-amino-acid chain: Polyamine export protein (432 aa).

A CNNM transmembrane domain is found at 1-201; it reads MIMELFHTIL…AEAGVLKTQE (201 aa). 4 helical membrane-spanning segments follow: residues 2 to 22, 61 to 81, 100 to 120, and 138 to 158; these read IMEL…SAVV, FITV…GIGE, WIAP…FILF, and LSVV…VWFF. 2 CBS domains span residues 220-279 and 286-345; these read MTTR…NENV and LLRK…SNEE.

Belongs to the UPF0053 family. PaeA subfamily.

The protein resides in the cell inner membrane. Its function is as follows. Involved in cadaverine and putrescine tolerance in stationary phase. May facilitate the efflux of both cadaverine and putrescine from the cytoplasm, reducing potentially toxic levels under certain stress conditions. The polypeptide is Polyamine export protein (Haemophilus influenzae (strain ATCC 51907 / DSM 11121 / KW20 / Rd)).